Here is a 251-residue protein sequence, read N- to C-terminus: Flap endonuclease Xni (251 aa).

Asp-104 contacts Mg(2+). The 5'-3' exonuclease domain maps to 160–249 (VLPRQLPDYW…IDGNLQQLRL (90 aa)). Residues Leu-171, Ala-172, Pro-180, Val-182, and Ile-185 each contribute to the K(+) site. The tract at residues 184-189 (GIGPKS) is interaction with DNA.

Belongs to the Xni family. Mg(2+) is required as a cofactor. Requires K(+) as cofactor.

Its function is as follows. Has flap endonuclease activity. During DNA replication, flap endonucleases cleave the 5'-overhanging flap structure that is generated by displacement synthesis when DNA polymerase encounters the 5'-end of a downstream Okazaki fragment. The chain is Flap endonuclease Xni from Salmonella typhimurium (strain LT2 / SGSC1412 / ATCC 700720).